The following is a 108-amino-acid chain: ATP-dependent Clp protease adapter protein ClpS (108 aa).

Over residues 1–15 (MPHESSPDSQHEHGV) the composition is skewed to basic and acidic residues. Residues 1–22 (MPHESSPDSQHEHGVAVEAARP) form a disordered region.

Belongs to the ClpS family. As to quaternary structure, binds to the N-terminal domain of the chaperone ClpA.

Involved in the modulation of the specificity of the ClpAP-mediated ATP-dependent protein degradation. This chain is ATP-dependent Clp protease adapter protein ClpS, found in Stenotrophomonas maltophilia (strain K279a).